A 382-amino-acid polypeptide reads, in one-letter code: Mannitol-1-phosphate 5-dehydrogenase (382 aa).

3-14 (ALHFGAGNIGRG) contributes to the NAD(+) binding site.

This sequence belongs to the mannitol dehydrogenase family.

It catalyses the reaction D-mannitol 1-phosphate + NAD(+) = beta-D-fructose 6-phosphate + NADH + H(+). The protein is Mannitol-1-phosphate 5-dehydrogenase of Salmonella typhi.